The primary structure comprises 129 residues: NADH dehydrogenase [ubiquinone] 1 beta subcomplex subunit 4 (129 aa).

Ser-2 is subject to N-acetylserine. Residue Ser-26 is modified to Phosphoserine. A helical transmembrane segment spans residues 88–105; the sequence is LMGALCGFGPLIFIYYII.

This sequence belongs to the complex I NDUFB4 subunit family. Complex I is composed of 45 different subunits.

The protein localises to the mitochondrion inner membrane. Its function is as follows. Accessory subunit of the mitochondrial membrane respiratory chain NADH dehydrogenase (Complex I), that is believed not to be involved in catalysis. Complex I functions in the transfer of electrons from NADH to the respiratory chain. The immediate electron acceptor for the enzyme is believed to be ubiquinone. The protein is NADH dehydrogenase [ubiquinone] 1 beta subcomplex subunit 4 (NDUFB4) of Gorilla gorilla gorilla (Western lowland gorilla).